The sequence spans 138 residues: ATP synthase epsilon chain (138 aa).

It belongs to the ATPase epsilon chain family. In terms of assembly, F-type ATPases have 2 components, CF(1) - the catalytic core - and CF(0) - the membrane proton channel. CF(1) has five subunits: alpha(3), beta(3), gamma(1), delta(1), epsilon(1). CF(0) has three main subunits: a, b and c.

Its subcellular location is the cell membrane. Its function is as follows. Produces ATP from ADP in the presence of a proton gradient across the membrane. This Streptococcus suis (strain 98HAH33) protein is ATP synthase epsilon chain.